A 263-amino-acid chain; its full sequence is MYPFIPPARLLPGSPAPFLPSGPSCPQPSGPYPGPAVRVPGPTRSYVSTNVPFPELPRPNSAPTDPVGPLGTQGSMSSGPWAPGMGGQHPNVPYLFPESSPTPPLPVSGAPPVAWVTVPPGAWEPPAQYPTPEASYPSPGLQPSPNNPYPLPPGPSAASPGPGSLHRMNEIPGGSPSDSSNPESTLESTGQKKHLKLDNKSIKRRRSKKKSKRVTWGDIKTLTHKAESLGKQQGHNTTDPKMMLLCLMTMLHVNSQHESEGSK.

The tract at residues 13 to 238 (GSPAPFLPSG…LGKQQGHNTT (226 aa)) is disordered. Pro residues-rich tracts occupy residues 14-34 (SPAPFLPSGPSCPQPSGPYPG) and 140-155 (GLQPSPNNPYPLPPGP). The span at 156–165 (SAASPGPGSL) shows a compositional bias: low complexity. The span at 176 to 189 (PSDSSNPESTLEST) shows a compositional bias: polar residues. The span at 202-213 (IKRRRSKKKSKR) shows a compositional bias: basic residues.

This sequence belongs to the MISS family. Interacts with MAPK1. Phosphorylated in vitro by MAPK1.

The protein resides in the cytoplasm. It is found in the cytoskeleton. The protein localises to the spindle. Its function is as follows. Involved in the maintenance of the spindle integrity during the cytostatic factor (CSF) arrest of oocytes. The protein is MAPK-interacting and spindle-stabilizing protein (Mapk1ip1) of Mus musculus (Mouse).